We begin with the raw amino-acid sequence, 375 residues long: Anhydro-N-acetylmuramic acid kinase (375 aa).

An ATP-binding site is contributed by 19-26 (GTSLDGVD).

This sequence belongs to the anhydro-N-acetylmuramic acid kinase family.

It carries out the reaction 1,6-anhydro-N-acetyl-beta-muramate + ATP + H2O = N-acetyl-D-muramate 6-phosphate + ADP + H(+). The protein operates within amino-sugar metabolism; 1,6-anhydro-N-acetylmuramate degradation. It participates in cell wall biogenesis; peptidoglycan recycling. Catalyzes the specific phosphorylation of 1,6-anhydro-N-acetylmuramic acid (anhMurNAc) with the simultaneous cleavage of the 1,6-anhydro ring, generating MurNAc-6-P. Is required for the utilization of anhMurNAc either imported from the medium or derived from its own cell wall murein, and thus plays a role in cell wall recycling. This is Anhydro-N-acetylmuramic acid kinase from Ruegeria sp. (strain TM1040) (Silicibacter sp.).